The primary structure comprises 424 residues: Serine--tRNA ligase 1 (424 aa).

232–234 serves as a coordination point for L-serine; that stretch reads TAE. 263–265 is an ATP binding site; that stretch reads RSE. Residue glutamate 286 participates in L-serine binding. An ATP-binding site is contributed by 350–353; that stretch reads EISS. An L-serine-binding site is contributed by serine 386.

This sequence belongs to the class-II aminoacyl-tRNA synthetase family. Type-1 seryl-tRNA synthetase subfamily. In terms of assembly, homodimer. The tRNA molecule binds across the dimer.

Its subcellular location is the cytoplasm. It carries out the reaction tRNA(Ser) + L-serine + ATP = L-seryl-tRNA(Ser) + AMP + diphosphate + H(+). It catalyses the reaction tRNA(Sec) + L-serine + ATP = L-seryl-tRNA(Sec) + AMP + diphosphate + H(+). Its pathway is aminoacyl-tRNA biosynthesis; selenocysteinyl-tRNA(Sec) biosynthesis; L-seryl-tRNA(Sec) from L-serine and tRNA(Sec): step 1/1. Functionally, catalyzes the attachment of serine to tRNA(Ser). Is also able to aminoacylate tRNA(Sec) with serine, to form the misacylated tRNA L-seryl-tRNA(Sec), which will be further converted into selenocysteinyl-tRNA(Sec). This chain is Serine--tRNA ligase 1, found in Clostridium acetobutylicum (strain ATCC 824 / DSM 792 / JCM 1419 / IAM 19013 / LMG 5710 / NBRC 13948 / NRRL B-527 / VKM B-1787 / 2291 / W).